The chain runs to 168 residues: ATP synthase subunit b (168 aa).

A helical transmembrane segment spans residues 13-33 (WTFLFQTLNLLVVMGLLYVFL).

It belongs to the ATPase B chain family. As to quaternary structure, F-type ATPases have 2 components, F(1) - the catalytic core - and F(0) - the membrane proton channel. F(1) has five subunits: alpha(3), beta(3), gamma(1), delta(1), epsilon(1). F(0) has three main subunits: a(1), b(2) and c(10-14). The alpha and beta chains form an alternating ring which encloses part of the gamma chain. F(1) is attached to F(0) by a central stalk formed by the gamma and epsilon chains, while a peripheral stalk is formed by the delta and b chains.

Its subcellular location is the cell membrane. Functionally, f(1)F(0) ATP synthase produces ATP from ADP in the presence of a proton or sodium gradient. F-type ATPases consist of two structural domains, F(1) containing the extramembraneous catalytic core and F(0) containing the membrane proton channel, linked together by a central stalk and a peripheral stalk. During catalysis, ATP synthesis in the catalytic domain of F(1) is coupled via a rotary mechanism of the central stalk subunits to proton translocation. In terms of biological role, component of the F(0) channel, it forms part of the peripheral stalk, linking F(1) to F(0). The sequence is that of ATP synthase subunit b from Moorella thermoacetica (strain ATCC 39073 / JCM 9320).